A 132-amino-acid chain; its full sequence is Small ribosomal subunit protein uS8 (132 aa).

This sequence belongs to the universal ribosomal protein uS8 family. In terms of assembly, part of the 30S ribosomal subunit. Contacts proteins S5 and S12.

In terms of biological role, one of the primary rRNA binding proteins, it binds directly to 16S rRNA central domain where it helps coordinate assembly of the platform of the 30S subunit. The sequence is that of Small ribosomal subunit protein uS8 from Lactococcus lactis subsp. cremoris (strain MG1363).